The primary structure comprises 413 residues: Arginine biosynthesis bifunctional protein ArgJ (413 aa).

6 residues coordinate substrate: T158, K184, T195, E285, N408, and S413. T195 acts as the Nucleophile in catalysis.

It belongs to the ArgJ family. Heterotetramer of two alpha and two beta chains.

It localises to the cytoplasm. It catalyses the reaction N(2)-acetyl-L-ornithine + L-glutamate = N-acetyl-L-glutamate + L-ornithine. The enzyme catalyses L-glutamate + acetyl-CoA = N-acetyl-L-glutamate + CoA + H(+). Its pathway is amino-acid biosynthesis; L-arginine biosynthesis; L-ornithine and N-acetyl-L-glutamate from L-glutamate and N(2)-acetyl-L-ornithine (cyclic): step 1/1. It participates in amino-acid biosynthesis; L-arginine biosynthesis; N(2)-acetyl-L-ornithine from L-glutamate: step 1/4. Catalyzes two activities which are involved in the cyclic version of arginine biosynthesis: the synthesis of N-acetylglutamate from glutamate and acetyl-CoA as the acetyl donor, and of ornithine by transacetylation between N(2)-acetylornithine and glutamate. The protein is Arginine biosynthesis bifunctional protein ArgJ of Brucella suis biovar 1 (strain 1330).